The primary structure comprises 398 residues: 4-hydroxy-3-methylbut-2-enyl diphosphate reductase (398 aa).

Position 66 (C66) interacts with [4Fe-4S] cluster. H96 is a binding site for (2E)-4-hydroxy-3-methylbut-2-enyl diphosphate. Position 96 (H96) interacts with dimethylallyl diphosphate. H96 provides a ligand contact to isopentenyl diphosphate. A [4Fe-4S] cluster-binding site is contributed by C157. H185 provides a ligand contact to (2E)-4-hydroxy-3-methylbut-2-enyl diphosphate. Residue H185 coordinates dimethylallyl diphosphate. Position 185 (H185) interacts with isopentenyl diphosphate. The Proton donor role is filled by E187. A (2E)-4-hydroxy-3-methylbut-2-enyl diphosphate-binding site is contributed by T250. Residue C288 coordinates [4Fe-4S] cluster. (2E)-4-hydroxy-3-methylbut-2-enyl diphosphate is bound by residues S317, S318, N319, and S380. Dimethylallyl diphosphate contacts are provided by S317, S318, N319, and S380. Isopentenyl diphosphate is bound by residues S317, S318, N319, and S380.

It belongs to the IspH family. [4Fe-4S] cluster is required as a cofactor.

The enzyme catalyses isopentenyl diphosphate + 2 oxidized [2Fe-2S]-[ferredoxin] + H2O = (2E)-4-hydroxy-3-methylbut-2-enyl diphosphate + 2 reduced [2Fe-2S]-[ferredoxin] + 2 H(+). It carries out the reaction dimethylallyl diphosphate + 2 oxidized [2Fe-2S]-[ferredoxin] + H2O = (2E)-4-hydroxy-3-methylbut-2-enyl diphosphate + 2 reduced [2Fe-2S]-[ferredoxin] + 2 H(+). The protein operates within isoprenoid biosynthesis; dimethylallyl diphosphate biosynthesis; dimethylallyl diphosphate from (2E)-4-hydroxy-3-methylbutenyl diphosphate: step 1/1. Its pathway is isoprenoid biosynthesis; isopentenyl diphosphate biosynthesis via DXP pathway; isopentenyl diphosphate from 1-deoxy-D-xylulose 5-phosphate: step 6/6. In terms of biological role, catalyzes the conversion of 1-hydroxy-2-methyl-2-(E)-butenyl 4-diphosphate (HMBPP) into a mixture of isopentenyl diphosphate (IPP) and dimethylallyl diphosphate (DMAPP). Acts in the terminal step of the DOXP/MEP pathway for isoprenoid precursor biosynthesis. The polypeptide is 4-hydroxy-3-methylbut-2-enyl diphosphate reductase (Prochlorococcus marinus (strain MIT 9301)).